A 163-amino-acid chain; its full sequence is MSDAEDIPTGRKRRPREQTPVQRALGLLVRREHSRKELTRKLTARGIEDEAAQAAVAKLTEAGWQDDTRFAENLVRMRANTGYGPIHVRAELGTHGLDSAAIAAAMDSYEGDWQENARDLVRRRFGEAGPQDLTQRRKAADLLARRGFDGDSIRRATRYDPDD.

Positions 1-21 (MSDAEDIPTGRKRRPREQTPV) are disordered.

It belongs to the RecX family.

It is found in the cytoplasm. In terms of biological role, modulates RecA activity. This chain is Regulatory protein RecX, found in Stenotrophomonas maltophilia (strain K279a).